We begin with the raw amino-acid sequence, 213 residues long: Orotate phosphoribosyltransferase (213 aa).

Lys26 is a binding site for 5-phospho-alpha-D-ribose 1-diphosphate. 34-35 is an orotate binding site; the sequence is FF. 5-phospho-alpha-D-ribose 1-diphosphate contacts are provided by residues 72–73, Arg99, Lys100, Lys103, His105, and 124–132; these read YK and DDVITAGTA. Orotate is bound by residues Thr128 and Arg156.

The protein belongs to the purine/pyrimidine phosphoribosyltransferase family. PyrE subfamily. In terms of assembly, homodimer. Mg(2+) serves as cofactor.

The enzyme catalyses orotidine 5'-phosphate + diphosphate = orotate + 5-phospho-alpha-D-ribose 1-diphosphate. The protein operates within pyrimidine metabolism; UMP biosynthesis via de novo pathway; UMP from orotate: step 1/2. In terms of biological role, catalyzes the transfer of a ribosyl phosphate group from 5-phosphoribose 1-diphosphate to orotate, leading to the formation of orotidine monophosphate (OMP). This is Orotate phosphoribosyltransferase from Escherichia coli O45:K1 (strain S88 / ExPEC).